The sequence spans 1082 residues: Putative white-brown complex homolog protein 30 (1082 aa).

The next 2 helical transmembrane spans lie at 12 to 32 (HIFL…SLDG) and 292 to 312 (NIHA…IMVY). Positions 329–348 (SREAAARHAKETTQARERWK) are enriched in basic and acidic residues. The interval 329 to 437 (SREAAARHAK…QAPKGKQLHT (109 aa)) is disordered. Residues 484–726 (VAFKDLTLTL…FADIGITVPD (243 aa)) enclose the ABC transporter domain. 518-525 (GPSGAGKT) provides a ligand contact to ATP. Residues 832-1029 (RQYRYFVGRV…TLEAFVLSNA (198 aa)) enclose the ABC transmembrane type-2 domain. 5 consecutive transmembrane segments (helical) span residues 853–873 (ALDF…AKVN), 877–897 (IDTL…KISA), 958–978 (YIVL…FAIL), 979–999 (YSPS…TLIA), and 1054–1074 (WILC…IAYF).

The protein belongs to the ABC transporter superfamily. ABCG family. Eye pigment precursor importer (TC 3.A.1.204) subfamily.

Its subcellular location is the membrane. This Arabidopsis thaliana (Mouse-ear cress) protein is Putative white-brown complex homolog protein 30 (WBC30).